The chain runs to 389 residues: Cytochrome b (389 aa).

The next 8 membrane-spanning stretches (helical) occupy residues 32–52 (FGFF…LLAM), 76–98 (WLLR…IHML), 113–133 (LWVS…LGYV), 179–199 (FFSL…LHII), 225–245 (FTIK…TFVF), 290–310 (LGVL…FLTI), 325–345 (LFWS…QPAA), and 353–373 (LYST…IYIV). Heme b contacts are provided by His-82 and His-96. Heme b is bound by residues His-183 and His-197.

The protein belongs to the cytochrome b family. In terms of assembly, the main subunits of complex b-c1 are: cytochrome b, cytochrome c1 and the Rieske protein. Requires heme b as cofactor.

It is found in the mitochondrion inner membrane. In terms of biological role, component of the ubiquinol-cytochrome c reductase complex (complex III or cytochrome b-c1 complex) that is part of the mitochondrial respiratory chain. The b-c1 complex mediates electron transfer from ubiquinol to cytochrome c. Contributes to the generation of a proton gradient across the mitochondrial membrane that is then used for ATP synthesis. The polypeptide is Cytochrome b (cytB) (Dictyostelium discoideum (Social amoeba)).